The chain runs to 509 residues: Zinc finger CCCH-type with G patch domain-containing protein (509 aa).

The interval 41–61 (TRGSEPEATSDTKTPETSDNI) is disordered. Polar residues predominate over residues 47–58 (EATSDTKTPETS). Residues 155-178 (PCNYFLEGECRFDEVRCRYSHGAL) form a C3H1-type zinc finger. The tract at residues 254 to 278 (DDDLTSESEESNETDGSDAGNDSDM) is disordered. Residues 310-356 (TRGIGSKLMANMGYIHGTGLGSDGRGIVTPVSAQILPQGRSLDACME) form the G-patch domain. The interval 410 to 433 (GSQQTENANKKTKPNNLQQHSNKT) is disordered. Positions 423–433 (PNNLQQHSNKT) are enriched in polar residues.

The protein resides in the nucleus. Its function is as follows. Transcription repressor. This Drosophila mojavensis (Fruit fly) protein is Zinc finger CCCH-type with G patch domain-containing protein.